The following is a 207-amino-acid chain: Large ribosomal subunit protein uL4 (207 aa).

Residues 49–78 form a disordered region; it reads HAVKNRSAVSGGGRKPWRQKGTGRARQGSI.

This sequence belongs to the universal ribosomal protein uL4 family. Part of the 50S ribosomal subunit.

Its function is as follows. One of the primary rRNA binding proteins, this protein initially binds near the 5'-end of the 23S rRNA. It is important during the early stages of 50S assembly. It makes multiple contacts with different domains of the 23S rRNA in the assembled 50S subunit and ribosome. Forms part of the polypeptide exit tunnel. This Streptococcus pneumoniae serotype 19F (strain G54) protein is Large ribosomal subunit protein uL4.